We begin with the raw amino-acid sequence, 81 residues long: D-alanyl carrier protein (81 aa).

Residues 1 to 81 (MADEAIKNGV…KIIAKVEQAQ (81 aa)) enclose the Carrier domain. Residue Ser-39 is modified to O-(pantetheine 4'-phosphoryl)serine.

It belongs to the DltC family. Post-translationally, 4'-phosphopantetheine is transferred from CoA to a specific serine of apo-DCP.

The protein resides in the cytoplasm. Its pathway is cell wall biogenesis; lipoteichoic acid biosynthesis. Functionally, carrier protein involved in the D-alanylation of lipoteichoic acid (LTA). The loading of thioester-linked D-alanine onto DltC is catalyzed by D-alanine--D-alanyl carrier protein ligase DltA. The DltC-carried D-alanyl group is further transferred to cell membrane phosphatidylglycerol (PG) by forming an ester bond, probably catalyzed by DltD. D-alanylation of LTA plays an important role in modulating the properties of the cell wall in Gram-positive bacteria, influencing the net charge of the cell wall. The sequence is that of D-alanyl carrier protein from Lacticaseibacillus casei (strain BL23) (Lactobacillus casei).